Here is a 409-residue protein sequence, read N- to C-terminus: 1-deoxy-D-xylulose 5-phosphate reductoisomerase (409 aa).

Positions 5, 6, 7, 8, 31, 33, and 122 each coordinate NADPH. Lys123 contributes to the 1-deoxy-D-xylulose 5-phosphate binding site. Position 124 (Glu124) interacts with NADPH. Asp148 is a binding site for Mn(2+). Positions 149, 150, 186, and 209 each coordinate 1-deoxy-D-xylulose 5-phosphate. Glu150 contacts Mn(2+). Gly215 contacts NADPH. 4 residues coordinate 1-deoxy-D-xylulose 5-phosphate: Ser222, Asn227, Lys228, and Glu231. Residue Glu231 participates in Mn(2+) binding.

It belongs to the DXR family. Requires Mg(2+) as cofactor. It depends on Mn(2+) as a cofactor.

The enzyme catalyses 2-C-methyl-D-erythritol 4-phosphate + NADP(+) = 1-deoxy-D-xylulose 5-phosphate + NADPH + H(+). It participates in isoprenoid biosynthesis; isopentenyl diphosphate biosynthesis via DXP pathway; isopentenyl diphosphate from 1-deoxy-D-xylulose 5-phosphate: step 1/6. In terms of biological role, catalyzes the NADPH-dependent rearrangement and reduction of 1-deoxy-D-xylulose-5-phosphate (DXP) to 2-C-methyl-D-erythritol 4-phosphate (MEP). The chain is 1-deoxy-D-xylulose 5-phosphate reductoisomerase from Parasynechococcus marenigrum (strain WH8102).